The sequence spans 415 residues: Glucose-1-phosphate adenylyltransferase (415 aa).

Alpha-D-glucose 1-phosphate is bound by residues Tyr100, Gly165, 182-183 (EK), and Ser200.

It belongs to the bacterial/plant glucose-1-phosphate adenylyltransferase family. As to quaternary structure, homotetramer.

It carries out the reaction alpha-D-glucose 1-phosphate + ATP + H(+) = ADP-alpha-D-glucose + diphosphate. The protein operates within glycan biosynthesis; glycogen biosynthesis. In terms of biological role, involved in the biosynthesis of ADP-glucose, a building block required for the elongation reactions to produce glycogen. Catalyzes the reaction between ATP and alpha-D-glucose 1-phosphate (G1P) to produce pyrophosphate and ADP-Glc. The protein is Glucose-1-phosphate adenylyltransferase of Bifidobacterium animalis subsp. lactis (strain AD011).